A 159-amino-acid polypeptide reads, in one-letter code: SsrA-binding protein (159 aa).

The protein belongs to the SmpB family.

It localises to the cytoplasm. Functionally, required for rescue of stalled ribosomes mediated by trans-translation. Binds to transfer-messenger RNA (tmRNA), required for stable association of tmRNA with ribosomes. tmRNA and SmpB together mimic tRNA shape, replacing the anticodon stem-loop with SmpB. tmRNA is encoded by the ssrA gene; the 2 termini fold to resemble tRNA(Ala) and it encodes a 'tag peptide', a short internal open reading frame. During trans-translation Ala-aminoacylated tmRNA acts like a tRNA, entering the A-site of stalled ribosomes, displacing the stalled mRNA. The ribosome then switches to translate the ORF on the tmRNA; the nascent peptide is terminated with the 'tag peptide' encoded by the tmRNA and targeted for degradation. The ribosome is freed to recommence translation, which seems to be the essential function of trans-translation. The protein is SsrA-binding protein of Coxiella burnetii (strain RSA 331 / Henzerling II).